An 87-amino-acid polypeptide reads, in one-letter code: Scorpine-like peptide Tco 41.46-2 (87 aa).

The first 19 residues, M1–C19, serve as a signal peptide directing secretion. The BetaSPN-type CS-alpha/beta domain maps to Q53–D87. Disulfide bonds link C56/C77, C63/C82, and C67/C84.

Belongs to the long chain scorpion toxin family. Class 1 subfamily. In terms of tissue distribution, expressed by the venom gland.

It localises to the secreted. Functionally, may have antibacterial activity. In terms of biological role, inhibits voltage-gated potassium channel. Does not induce hemolytic activity, lactate dehydrogenase (LDH) release from mast cells, mast cell degranulation, and antimicrobial effects. In vivo, injection into mice causes moderate edema formation, but induces very weak or no change in nociceptive sensibility. It also reduces mice locomotion, suggesting an increase in anxiety, but causes no alteration in rearing (standing on hind limbs). This Tityus costatus (Brazilian scorpion) protein is Scorpine-like peptide Tco 41.46-2.